A 257-amino-acid polypeptide reads, in one-letter code: Beta-fibrinogenase mucrofibrase-4 (257 aa).

Residues 1-18 (MVLIRVLANLLILQLSYA) form the signal peptide. Positions 19–24 (QKSSEL) are excised as a propeptide. The region spanning 25 to 248 (VIGGDECNIN…HLDWIKGFIA (224 aa)) is the Peptidase S1 domain. Cystine bridges form between Cys31–Cys162, Cys49–Cys65, Cys97–Cys255, Cys141–Cys209, Cys173–Cys188, and Cys199–Cys224. Catalysis depends on charge relay system residues His64 and Asp109. Ser203 serves as the catalytic Charge relay system.

Belongs to the peptidase S1 family. Snake venom subfamily. Monomer. In terms of tissue distribution, expressed by the venom gland.

Its subcellular location is the secreted. In terms of biological role, snake venom serine protease with fibrinogenolytic activities. Cleaves beta-chain of fibrinogen (FGB) efficiently and shows relatively lower activity on alpha-chain. The protein is Beta-fibrinogenase mucrofibrase-4 of Protobothrops mucrosquamatus (Taiwan habu).